Here is a 428-residue protein sequence, read N- to C-terminus: NADP-specific glutamate dehydrogenase (428 aa).

Substrate-binding residues include K68 and K92. Catalysis depends on K104, which acts as the Proton donor. NADP(+) contacts are provided by T188 and N219. S356 contacts substrate.

This sequence belongs to the Glu/Leu/Phe/Val dehydrogenases family. As to quaternary structure, homohexamer.

It catalyses the reaction L-glutamate + NADP(+) + H2O = 2-oxoglutarate + NH4(+) + NADPH + H(+). Its function is as follows. Catalyzes the reversible oxidative deamination of glutamate to alpha-ketoglutarate and ammonia. This chain is NADP-specific glutamate dehydrogenase (gdhA), found in Synechocystis sp. (strain ATCC 27184 / PCC 6803 / Kazusa).